A 590-amino-acid polypeptide reads, in one-letter code: Beta-glucosidase 29 (590 aa).

The N-terminal stretch at 1–21 is a signal peptide; it reads MNVQIFILLLIISWLTPKITS. A beta-D-glucoside-binding positions include Gln48, His151, and 196–197; that span reads NE. Catalysis depends on Glu197, which acts as the Proton donor. An intrachain disulfide couples Cys216 to Cys224. 2 N-linked (GlcNAc...) asparagine glycosylation sites follow: Asn255 and Asn331. Residue Tyr341 participates in a beta-D-glucoside binding. A glycan (N-linked (GlcNAc...) asparagine) is linked at Asn371. A beta-D-glucoside contacts are provided by residues Glu413, Trp463, 470–471, and Phe479; that span reads EW. Glu413 functions as the Nucleophile in the catalytic mechanism. Residues Asn522 and Asn553 are each glycosylated (N-linked (GlcNAc...) asparagine).

This sequence belongs to the glycosyl hydrolase 1 family.

The enzyme catalyses Hydrolysis of terminal, non-reducing beta-D-glucosyl residues with release of beta-D-glucose.. The sequence is that of Beta-glucosidase 29 from Arabidopsis thaliana (Mouse-ear cress).